The primary structure comprises 64 residues: Prokaryotic ubiquitin-like protein Pup (64 aa).

Positions 1–35 are disordered; sequence MAQGGQVSAGGGRRDDDEPIEQTSGAGTQQVNVTG. Over residues 21 to 33 the composition is skewed to polar residues; that stretch reads EQTSGAGTQQVNV. The interval 21–58 is ARC ATPase binding; sequence EQTSGAGTQQVNVTGTDDLLDEIDGLLENNAEEFVRSY. Q64 carries the post-translational modification Deamidated glutamine. Q64 is covalently cross-linked (Isoglutamyl lysine isopeptide (Gln-Lys) (interchain with K-? in acceptor proteins)).

It belongs to the prokaryotic ubiquitin-like protein family. In terms of assembly, strongly interacts with the proteasome-associated ATPase ARC through a hydrophobic interface; the interacting region of Pup lies in its C-terminal half. There is one Pup binding site per ARC hexamer ring. Is modified by deamidation of its C-terminal glutamine to glutamate by the deamidase Dop, a prerequisite to the subsequent pupylation process.

Its pathway is protein degradation; proteasomal Pup-dependent pathway. Protein modifier that is covalently attached to lysine residues of substrate proteins, thereby targeting them for proteasomal degradation. The tagging system is termed pupylation. The sequence is that of Prokaryotic ubiquitin-like protein Pup from Corynebacterium jeikeium (strain K411).